The sequence spans 384 residues: Monomethylxanthine methyltransferase 2 (384 aa).

S-adenosyl-L-homocysteine is bound by residues Tyr18, Cys61, Asn66, Asp100, Leu101, Ser139, Phe140, and Cys156. The theobromine site is built by Tyr157, His160, and Trp161. Positions 178, 262, and 263 each coordinate Mg(2+). Tyr368 contributes to the theobromine binding site.

The protein belongs to the methyltransferase superfamily. Type-7 methyltransferase family. Mg(2+) serves as cofactor. Expressed, at low levels, in young leaves, floral buds and immature fruits (grains), but not in old leaves and mature fruits. Highly expressed in developing endosperm and flower buds. Detected in young leaves.

It carries out the reaction 7-methylxanthine + S-adenosyl-L-methionine = theobromine + S-adenosyl-L-homocysteine + H(+). It participates in alkaloid biosynthesis. Functionally, involved in the biosynthesis of caffeine. Catalyzes the conversion of 7-methylxanthine (7mX) to theobromine and with a lower activity of paraxanthine to caffeine. Does not have 1-N-methylation activity. This is Monomethylxanthine methyltransferase 2 from Coffea arabica (Arabian coffee).